The sequence spans 181 residues: ATP-dependent protease subunit HslV (181 aa).

Thr11 is a catalytic residue. Ala166, Cys169, and Thr172 together coordinate Na(+).

The protein belongs to the peptidase T1B family. HslV subfamily. A double ring-shaped homohexamer of HslV is capped on each side by a ring-shaped HslU homohexamer. The assembly of the HslU/HslV complex is dependent on binding of ATP.

The protein localises to the cytoplasm. The catalysed reaction is ATP-dependent cleavage of peptide bonds with broad specificity.. Its activity is regulated as follows. Allosterically activated by HslU binding. In terms of biological role, protease subunit of a proteasome-like degradation complex believed to be a general protein degrading machinery. In Chlorobaculum parvum (strain DSM 263 / NCIMB 8327) (Chlorobium vibrioforme subsp. thiosulfatophilum), this protein is ATP-dependent protease subunit HslV.